Reading from the N-terminus, the 212-residue chain is Large ribosomal subunit protein uL1 (212 aa).

It belongs to the universal ribosomal protein uL1 family. As to quaternary structure, part of the 50S ribosomal subunit.

In terms of biological role, binds directly to 23S rRNA. Probably involved in E site tRNA release. Protein L1 is also a translational repressor protein, it controls the translation of its operon by binding to its mRNA. The chain is Large ribosomal subunit protein uL1 from Haloarcula marismortui (strain ATCC 43049 / DSM 3752 / JCM 8966 / VKM B-1809) (Halobacterium marismortui).